The chain runs to 30 residues: Snaclec coagulation factor IX/factor X-binding protein subunit B (30 aa).

Cys2 and Cys13 are oxidised to a cystine. Positions 9 to 30 constitute a C-type lectin domain; sequence YEGHCYRVFTEPQNWADAEKFC.

The protein belongs to the snaclec family. In terms of assembly, heterodimer of subunits A and B; disulfide-linked. Post-translationally, glycosylated. In terms of tissue distribution, expressed by the venom gland.

It is found in the secreted. Anticoagulant protein which binds to the gamma-carboxyglutamic acid-domain regions of factors IX (F9) and factor X (F10) in the presence of calcium with a 1 to 1 stoichiometry. This Bothrops jararaca (Jararaca) protein is Snaclec coagulation factor IX/factor X-binding protein subunit B.